The sequence spans 216 residues: Uracil phosphoribosyltransferase (216 aa).

5-phospho-alpha-D-ribose 1-diphosphate contacts are provided by residues Arg-85, Arg-110, and 135-143 (DPMVATGYS). Uracil is bound by residues Ile-200 and 205-207 (GDA). Position 206 (Asp-206) interacts with 5-phospho-alpha-D-ribose 1-diphosphate.

The protein belongs to the UPRTase family. Requires Mg(2+) as cofactor.

The enzyme catalyses UMP + diphosphate = 5-phospho-alpha-D-ribose 1-diphosphate + uracil. Its pathway is pyrimidine metabolism; UMP biosynthesis via salvage pathway; UMP from uracil: step 1/1. Its activity is regulated as follows. Allosterically activated by GTP. Functionally, catalyzes the conversion of uracil and 5-phospho-alpha-D-ribose 1-diphosphate (PRPP) to UMP and diphosphate. This Burkholderia thailandensis (strain ATCC 700388 / DSM 13276 / CCUG 48851 / CIP 106301 / E264) protein is Uracil phosphoribosyltransferase.